Reading from the N-terminus, the 617-residue chain is tRNA 5-methylaminomethyl-2-thiouridine biosynthesis bifunctional protein MnmC (617 aa).

The interval 1–226 is tRNA (mnm(5)s(2)U34)-methyltransferase; the sequence is MLDWQNGQLY…KREMLQGDLP (226 aa). Positions 241–617 are FAD-dependent cmnm(5)s(2)U34 oxidoreductase; it reads IGGGIAGCAA…SPAIPVSIKG (377 aa).

The protein in the N-terminal section; belongs to the methyltransferase superfamily. tRNA (mnm(5)s(2)U34)-methyltransferase family. This sequence in the C-terminal section; belongs to the DAO family. Requires FAD as cofactor.

It is found in the cytoplasm. The enzyme catalyses 5-aminomethyl-2-thiouridine(34) in tRNA + S-adenosyl-L-methionine = 5-methylaminomethyl-2-thiouridine(34) in tRNA + S-adenosyl-L-homocysteine + H(+). Functionally, catalyzes the last two steps in the biosynthesis of 5-methylaminomethyl-2-thiouridine (mnm(5)s(2)U) at the wobble position (U34) in tRNA. Catalyzes the FAD-dependent demodification of cmnm(5)s(2)U34 to nm(5)s(2)U34, followed by the transfer of a methyl group from S-adenosyl-L-methionine to nm(5)s(2)U34, to form mnm(5)s(2)U34. This Nitrosospira multiformis (strain ATCC 25196 / NCIMB 11849 / C 71) protein is tRNA 5-methylaminomethyl-2-thiouridine biosynthesis bifunctional protein MnmC.